A 235-amino-acid polypeptide reads, in one-letter code: Eukaryotic translation initiation factor 4E-1 (235 aa).

The tract at residues 1-52 is disordered; sequence MVVEDSMKATSAEDLSNSIANQNPRGRGGDEDEELEEGEIVGDDDLDSSNLS. A compositionally biased stretch (polar residues) spans 13–24; sequence EDLSNSIANQNP. The span at 30 to 47 shows a compositional bias: acidic residues; that stretch reads DEDEELEEGEIVGDDDLD. 2 EIF4G-binding regions span residues 60-63 and 70-106; these read HPLE and FDNP…NNIH. Residues 78–83, Lys-110, and 128–129 each bind mRNA; these read KQATWG and WE. Cys-133 and Cys-171 form a disulfide bridge. The tract at residues 154–163 is EIF4G-binding; sequence YTLLAMIGEQ. MRNA contacts are provided by residues 178 to 183 and 223 to 227; these read RSGQDK and KKFDR.

Belongs to the eukaryotic initiation factor 4E family. As to quaternary structure, EIF4F is a multi-subunit complex, the composition of which varies with external and internal environmental conditions. It is composed of at least EIF4A, EIF4E and EIF4G. EIF4E is also known to interact with other partners. Interacts directly with eIF4G. In higher plants two isoforms of EIF4F have been identified, named isoform EIF4F and isoform EIF(iso)4F. Isoform EIF4F has subunits p220 and p26, whereas isoform EIF(iso)4F has subunits p82 and p28. (Microbial infection) Interacts with potyvirus viral genome-linked protein (VPg); this interaction is possible in susceptible hosts but impaired in resistant plants. Post-translationally, according to the redox status, the Cys-133-Cys-171 disulfide bridge may have a role in regulating protein function by affecting its ability to bind capped mRNA.

It localises to the nucleus. It is found in the cytoplasm. Component of the protein complex eIF4F, which is involved in the recognition of the mRNA cap, ATP-dependent unwinding of 5'-terminal secondary structure and recruitment of mRNA to the ribosome. Recognizes and binds the 7-methylguanosine-containing mRNA cap during an early step in the initiation of protein synthesis and facilitates ribosome binding by inducing the unwinding of the mRNAs secondary structures. Key component of recessive resistance to potyviruses and Tombusviridae genus Carmovirus such as melon necrotic spot virus (MNSV). In terms of biological role, (Microbial infection) Susceptibility host factor required for viral infection by recruiting viral RNAs, including uncapped and non-polyadenylated RNA, to the host ribosomal complex via an interaction with viral genome-linked protein (VPg). In Cucumis melo (Muskmelon), this protein is Eukaryotic translation initiation factor 4E-1.